The primary structure comprises 188 residues: Elongation factor P (188 aa).

Residue Lys-34 is modified to N6-(3,6-diaminohexanoyl)-5-hydroxylysine.

This sequence belongs to the elongation factor P family. In terms of processing, may be beta-lysylated on the epsilon-amino group of Lys-34 by the combined action of EpmA and EpmB, and then hydroxylated on the C5 position of the same residue by EpmC (if this protein is present). Lysylation is critical for the stimulatory effect of EF-P on peptide-bond formation. The lysylation moiety may extend toward the peptidyltransferase center and stabilize the terminal 3-CCA end of the tRNA. Hydroxylation of the C5 position on Lys-34 may allow additional potential stabilizing hydrogen-bond interactions with the P-tRNA.

Its subcellular location is the cytoplasm. The protein operates within protein biosynthesis; polypeptide chain elongation. Involved in peptide bond synthesis. Alleviates ribosome stalling that occurs when 3 or more consecutive Pro residues or the sequence PPG is present in a protein, possibly by augmenting the peptidyl transferase activity of the ribosome. Modification of Lys-34 is required for alleviation. This is Elongation factor P from Proteus mirabilis (strain HI4320).